We begin with the raw amino-acid sequence, 107 residues long: Nucleoid-associated protein Pnuc_0701 (107 aa).

The protein belongs to the YbaB/EbfC family. In terms of assembly, homodimer.

It is found in the cytoplasm. The protein resides in the nucleoid. Its function is as follows. Binds to DNA and alters its conformation. May be involved in regulation of gene expression, nucleoid organization and DNA protection. This chain is Nucleoid-associated protein Pnuc_0701, found in Polynucleobacter asymbioticus (strain DSM 18221 / CIP 109841 / QLW-P1DMWA-1) (Polynucleobacter necessarius subsp. asymbioticus).